Here is a 320-residue protein sequence, read N- to C-terminus: Acetyl-coenzyme A carboxylase carboxyl transferase subunit alpha (320 aa).

Positions 41–295 (RIEEKAGQAL…GDAIAQAFDE (255 aa)) constitute a CoA carboxyltransferase C-terminal domain.

Belongs to the AccA family. Acetyl-CoA carboxylase is a heterohexamer composed of biotin carboxyl carrier protein (AccB), biotin carboxylase (AccC) and two subunits each of ACCase subunit alpha (AccA) and ACCase subunit beta (AccD).

Its subcellular location is the cytoplasm. It catalyses the reaction N(6)-carboxybiotinyl-L-lysyl-[protein] + acetyl-CoA = N(6)-biotinyl-L-lysyl-[protein] + malonyl-CoA. It participates in lipid metabolism; malonyl-CoA biosynthesis; malonyl-CoA from acetyl-CoA: step 1/1. Its function is as follows. Component of the acetyl coenzyme A carboxylase (ACC) complex. First, biotin carboxylase catalyzes the carboxylation of biotin on its carrier protein (BCCP) and then the CO(2) group is transferred by the carboxyltransferase to acetyl-CoA to form malonyl-CoA. The chain is Acetyl-coenzyme A carboxylase carboxyl transferase subunit alpha from Bradyrhizobium sp. (strain ORS 278).